Consider the following 776-residue polypeptide: Homoaconitase, mitochondrial (776 aa).

The N-terminal 24 residues, 1–24, are a transit peptide targeting the mitochondrion; that stretch reads MVALRRAVALNAVAIARLQTRALT. Positions 392, 459, and 462 each coordinate [4Fe-4S] cluster.

This sequence belongs to the aconitase/IPM isomerase family. [4Fe-4S] cluster is required as a cofactor.

Its subcellular location is the mitochondrion. The catalysed reaction is (2R,3S)-homoisocitrate = cis-homoaconitate + H2O. It participates in amino-acid biosynthesis; L-lysine biosynthesis via AAA pathway; L-alpha-aminoadipate from 2-oxoglutarate: step 3/5. Catalyzes the reversible hydration of cis-homoaconitate to (2R,3S)-homoisocitrate, a step in the alpha-aminoadipate pathway for lysine biosynthesis. The protein is Homoaconitase, mitochondrial (LYS4) of Gibberella zeae (strain ATCC MYA-4620 / CBS 123657 / FGSC 9075 / NRRL 31084 / PH-1) (Wheat head blight fungus).